Consider the following 130-residue polypeptide: Small ribosomal subunit protein uS9 (130 aa).

Positions 106-130 (RDSRKVERKKPGLKKARKASQFSKR) are disordered. Residues 111 to 130 (VERKKPGLKKARKASQFSKR) show a composition bias toward basic residues.

The protein belongs to the universal ribosomal protein uS9 family.

The polypeptide is Small ribosomal subunit protein uS9 (Streptococcus pneumoniae serotype 2 (strain D39 / NCTC 7466)).